Reading from the N-terminus, the 384-residue chain is Glucans biosynthesis protein C (384 aa).

A run of 10 helical transmembrane segments spans residues 17 to 37 (AWLM…THSW), 54 to 74 (FIHA…SYML), 91 to 111 (VGIP…ILLQ), 140 to 160 (LWFL…FTWF), 173 to 193 (AISL…YAAI), 212 to 232 (FIVM…LAFI), 240 to 260 (FTTP…AYLL), 274 to 294 (TESV…FSLG), 311 to 331 (ASLF…AYIT), and 338 to 358 (LIGF…LYEI).

Belongs to the acyltransferase 3 family. OpgC subfamily.

It localises to the cell membrane. It functions in the pathway glycan metabolism; osmoregulated periplasmic glucan (OPG) biosynthesis. Necessary for the succinyl substitution of periplasmic glucans. Could catalyze the transfer of succinyl residues from the cytoplasmic side of the membrane to the nascent glucan backbones on the periplasmic side of the membrane. The protein is Glucans biosynthesis protein C of Salmonella schwarzengrund (strain CVM19633).